Consider the following 252-residue polypeptide: Imidazole glycerol phosphate synthase subunit HisF (252 aa).

Active-site residues include D11 and D130.

It belongs to the HisA/HisF family. Heterodimer of HisH and HisF.

Its subcellular location is the cytoplasm. The enzyme catalyses 5-[(5-phospho-1-deoxy-D-ribulos-1-ylimino)methylamino]-1-(5-phospho-beta-D-ribosyl)imidazole-4-carboxamide + L-glutamine = D-erythro-1-(imidazol-4-yl)glycerol 3-phosphate + 5-amino-1-(5-phospho-beta-D-ribosyl)imidazole-4-carboxamide + L-glutamate + H(+). It functions in the pathway amino-acid biosynthesis; L-histidine biosynthesis; L-histidine from 5-phospho-alpha-D-ribose 1-diphosphate: step 5/9. IGPS catalyzes the conversion of PRFAR and glutamine to IGP, AICAR and glutamate. The HisF subunit catalyzes the cyclization activity that produces IGP and AICAR from PRFAR using the ammonia provided by the HisH subunit. This chain is Imidazole glycerol phosphate synthase subunit HisF, found in Acinetobacter baylyi (strain ATCC 33305 / BD413 / ADP1).